A 257-amino-acid chain; its full sequence is Phycoerythrobilin:ferredoxin oxidoreductase (257 aa).

This sequence belongs to the HY2 family.

The catalysed reaction is (3Z)-phycoerythrobilin + oxidized 2[4Fe-4S]-[ferredoxin] = 15,16-dihydrobiliverdin + reduced 2[4Fe-4S]-[ferredoxin] + 2 H(+). In terms of biological role, catalyzes the two-electron reduction of the C2 and C3(1) diene system of 15,16-dihydrobiliverdin. This is Phycoerythrobilin:ferredoxin oxidoreductase (pebB) from Prochlorococcus marinus subsp. pastoris (strain CCMP1986 / NIES-2087 / MED4).